Here is a 312-residue protein sequence, read N- to C-terminus: MSFHQQFFTLNNGNKIPAIAIIGTGTRWYKNEETDATFSNSLVEQIVYALKLPGIIHIDAAEIYRTYPEVGKALSLTEKPRNAIFLTDKYSPQIKMSDSPADGLDLALKKMGTDYVDLYLLHSPFVSKEVNGLSLEEAWKDMEQLYKSGKAKNIGVSNFAVEDLQRILKVAEVKPQVNQIEFSPFLQNQTPGIYKFCQEHDILVEAYSPLGPLQKKTAQDDSQPFFEYVKELSEKYIKSEAQIILRWVTKRGVLPVTTSSKPQRISDAQNLFSFDLTAEEVDKITELGLEHEPLRLYWNKLYGKYNYAAQKV.

Residues G25, T26, R27, and D59 each coordinate NADPH. Active-site proton donor residues include Y64 and H122. Phosphoserine is present on S123. 10 residues coordinate NADPH: S157, Q179, S208, L210, T257, T258, S259, S260, K261, and R264.

The protein belongs to the aldo/keto reductase family. Monomer. Post-translationally, the N-terminus is blocked.

Its subcellular location is the cytoplasm. The protein resides in the nucleus. In terms of biological role, reduces aromatic alpha-keto amides, aliphatic and aromatic alpha-keto esters, but not beta-keto esters. This chain is NADPH-dependent alpha-keto amide reductase, found in Saccharomyces cerevisiae (strain ATCC 204508 / S288c) (Baker's yeast).